We begin with the raw amino-acid sequence, 318 residues long: Methionyl-tRNA formyltransferase (318 aa).

A (6S)-5,6,7,8-tetrahydrofolate-binding site is contributed by 117–120 (SLLP).

It belongs to the Fmt family.

It catalyses the reaction L-methionyl-tRNA(fMet) + (6R)-10-formyltetrahydrofolate = N-formyl-L-methionyl-tRNA(fMet) + (6S)-5,6,7,8-tetrahydrofolate + H(+). In terms of biological role, attaches a formyl group to the free amino group of methionyl-tRNA(fMet). The formyl group appears to play a dual role in the initiator identity of N-formylmethionyl-tRNA by promoting its recognition by IF2 and preventing the misappropriation of this tRNA by the elongation apparatus. The chain is Methionyl-tRNA formyltransferase from Malacoplasma penetrans (strain HF-2) (Mycoplasma penetrans).